Here is a 275-residue protein sequence, read N- to C-terminus: 3-methyl-2-oxobutanoate hydroxymethyltransferase (275 aa).

Mg(2+) is bound by residues Asp-55 and Asp-94. 3-methyl-2-oxobutanoate is bound by residues 55–56 (DS), Asp-94, and Lys-122. Glu-124 contributes to the Mg(2+) binding site. Glu-191 acts as the Proton acceptor in catalysis.

It belongs to the PanB family. In terms of assembly, homodecamer; pentamer of dimers. It depends on Mg(2+) as a cofactor.

The protein resides in the cytoplasm. It carries out the reaction 3-methyl-2-oxobutanoate + (6R)-5,10-methylene-5,6,7,8-tetrahydrofolate + H2O = 2-dehydropantoate + (6S)-5,6,7,8-tetrahydrofolate. It functions in the pathway cofactor biosynthesis; (R)-pantothenate biosynthesis; (R)-pantoate from 3-methyl-2-oxobutanoate: step 1/2. Catalyzes the reversible reaction in which hydroxymethyl group from 5,10-methylenetetrahydrofolate is transferred onto alpha-ketoisovalerate to form ketopantoate. The chain is 3-methyl-2-oxobutanoate hydroxymethyltransferase from Marinomonas sp. (strain MWYL1).